We begin with the raw amino-acid sequence, 141 residues long: Nucleoside diphosphate kinase (141 aa).

Positions 11, 59, 87, 93, 104, and 114 each coordinate ATP. The Pros-phosphohistidine intermediate role is filled by His-117.

Belongs to the NDK family. Homotetramer. Requires Mg(2+) as cofactor.

The protein resides in the cytoplasm. The catalysed reaction is a 2'-deoxyribonucleoside 5'-diphosphate + ATP = a 2'-deoxyribonucleoside 5'-triphosphate + ADP. It catalyses the reaction a ribonucleoside 5'-diphosphate + ATP = a ribonucleoside 5'-triphosphate + ADP. Major role in the synthesis of nucleoside triphosphates other than ATP. The ATP gamma phosphate is transferred to the NDP beta phosphate via a ping-pong mechanism, using a phosphorylated active-site intermediate. This Pseudomonas putida (strain ATCC 47054 / DSM 6125 / CFBP 8728 / NCIMB 11950 / KT2440) protein is Nucleoside diphosphate kinase.